Reading from the N-terminus, the 398-residue chain is Acetate kinase (398 aa).

N7 lines the Mg(2+) pocket. K14 serves as a coordination point for ATP. Residue R92 coordinates substrate. D149 acts as the Proton donor/acceptor in catalysis. ATP contacts are provided by residues 209-213 (HLGNG), 284-286 (DFR), and 332-336 (GVGEN). E385 lines the Mg(2+) pocket.

This sequence belongs to the acetokinase family. As to quaternary structure, homodimer. Mg(2+) is required as a cofactor. It depends on Mn(2+) as a cofactor.

It localises to the cytoplasm. It catalyses the reaction acetate + ATP = acetyl phosphate + ADP. It functions in the pathway metabolic intermediate biosynthesis; acetyl-CoA biosynthesis; acetyl-CoA from acetate: step 1/2. In terms of biological role, catalyzes the formation of acetyl phosphate from acetate and ATP. Can also catalyze the reverse reaction. The protein is Acetate kinase of Clostridioides difficile (strain 630) (Peptoclostridium difficile).